Reading from the N-terminus, the 311-residue chain is Bifunctional protein FolD (311 aa).

Residue 174–176 (GKG) coordinates NADP(+).

It belongs to the tetrahydrofolate dehydrogenase/cyclohydrolase family. As to quaternary structure, homodimer.

It catalyses the reaction (6R)-5,10-methylene-5,6,7,8-tetrahydrofolate + NADP(+) = (6R)-5,10-methenyltetrahydrofolate + NADPH. It carries out the reaction (6R)-5,10-methenyltetrahydrofolate + H2O = (6R)-10-formyltetrahydrofolate + H(+). It functions in the pathway one-carbon metabolism; tetrahydrofolate interconversion. In terms of biological role, catalyzes the oxidation of 5,10-methylenetetrahydrofolate to 5,10-methenyltetrahydrofolate and then the hydrolysis of 5,10-methenyltetrahydrofolate to 10-formyltetrahydrofolate. In Pyrobaculum neutrophilum (strain DSM 2338 / JCM 9278 / NBRC 100436 / V24Sta) (Thermoproteus neutrophilus), this protein is Bifunctional protein FolD.